Consider the following 480-residue polypeptide: 2-succinylbenzoate--CoA ligase (480 aa).

The protein belongs to the ATP-dependent AMP-binding enzyme family. MenE subfamily.

It carries out the reaction 2-succinylbenzoate + ATP + CoA = 2-succinylbenzoyl-CoA + AMP + diphosphate. Its pathway is quinol/quinone metabolism; 1,4-dihydroxy-2-naphthoate biosynthesis; 1,4-dihydroxy-2-naphthoate from chorismate: step 5/7. It participates in quinol/quinone metabolism; menaquinone biosynthesis. Converts 2-succinylbenzoate (OSB) to 2-succinylbenzoyl-CoA (OSB-CoA). This Oceanobacillus iheyensis (strain DSM 14371 / CIP 107618 / JCM 11309 / KCTC 3954 / HTE831) protein is 2-succinylbenzoate--CoA ligase.